The sequence spans 428 residues: GTPase Obg (428 aa).

An Obg domain is found at 1–158 (MFVDQVKVYV…RYIVLELKVL (158 aa)). The tract at residues 117–143 (AKGGRGGRGNTRFATPANPAPQLSEHG) is disordered. In terms of domain architecture, OBG-type G spans 159–329 (ADVGLVGFPS…LLFEVANQLE (171 aa)). Residues 165–172 (GFPSVGKS), 190–194 (FTTLV), 212–215 (DLPG), 282–285 (NKMD), and 310–312 (SAV) contribute to the GTP site. Residues S172 and T192 each contribute to the Mg(2+) site. Residues 350 to 428 (TMEDEEIPFN…LLEFEFEFID (79 aa)) form the OCT domain.

This sequence belongs to the TRAFAC class OBG-HflX-like GTPase superfamily. OBG GTPase family. Monomer. The cofactor is Mg(2+).

The protein localises to the cytoplasm. An essential GTPase which binds GTP, GDP and possibly (p)ppGpp with moderate affinity, with high nucleotide exchange rates and a fairly low GTP hydrolysis rate. Plays a role in control of the cell cycle, stress response, ribosome biogenesis and in those bacteria that undergo differentiation, in morphogenesis control. This chain is GTPase Obg, found in Bacillus velezensis (strain DSM 23117 / BGSC 10A6 / LMG 26770 / FZB42) (Bacillus amyloliquefaciens subsp. plantarum).